We begin with the raw amino-acid sequence, 105 residues long: POU domain, class 3, transcription factor 3 (105 aa).

A POU-specific domain is found at 1–49 (QADVGLALGTLYGNVFSQTTICRFEALQLSFKNMCKLKPLLNKWLEEAD). The homeobox DNA-binding region spans 67–105 (KRKKRTSIEVSVKGALESHFLKCPKPAAQEITTLADSLQ).

This sequence belongs to the POU transcription factor family. Class-3 subfamily.

It localises to the nucleus. The polypeptide is POU domain, class 3, transcription factor 3 (pou3f3) (Xenopus laevis (African clawed frog)).